Here is a 347-residue protein sequence, read N- to C-terminus: Dihydroorotase (347 aa).

Zn(2+)-binding residues include His-13 and His-15. Substrate contacts are provided by residues 15-17 (HLR) and Asn-41. Zn(2+) contacts are provided by Lys-99, His-136, and His-174. Lys-99 carries the post-translational modification N6-carboxylysine. His-136 provides a ligand contact to substrate. Residue Leu-219 coordinates substrate. Position 247 (Asp-247) interacts with Zn(2+). Asp-247 is an active-site residue. Positions 251 and 263 each coordinate substrate.

It belongs to the metallo-dependent hydrolases superfamily. DHOase family. Class II DHOase subfamily. As to quaternary structure, homodimer. Requires Zn(2+) as cofactor.

It catalyses the reaction (S)-dihydroorotate + H2O = N-carbamoyl-L-aspartate + H(+). It participates in pyrimidine metabolism; UMP biosynthesis via de novo pathway; (S)-dihydroorotate from bicarbonate: step 3/3. In terms of biological role, catalyzes the reversible cyclization of carbamoyl aspartate to dihydroorotate. The chain is Dihydroorotase from Rhizobium meliloti (strain 1021) (Ensifer meliloti).